Here is a 127-residue protein sequence, read N- to C-terminus: uncharacterized protein (127 aa).

The 46-residue stretch at 1-46 (MEVGLSPSACLRRIKLMEQAGVIRGYTALVDPTQSESTIAVIINIT) folds into the HTH asnC-type domain.

Not known, symbiotically active. This is an uncharacterized protein from Sinorhizobium fredii (strain NBRC 101917 / NGR234).